Reading from the N-terminus, the 370-residue chain is MHLESIVLRNFRNYENLELEFSPSVNVFLGENAQGKTNLLEAVLMLALAKSHRTTNDKDFIMWEKEEAKMEGRVVKRGQTVPLELAITQKGKRAKVNHLEQKKLSQYVGNLNVVIFAPEDLSLVKGAPGIRRRFLNMEIGQMQPIYLHNLSEYQRILQQRNQYLKMLQMKRKVDPMLLDILTEQFADVAINLTKRRADFIQKLEAYAAPIHHQISRGLETLKIEYKASVTLNGDDPDTWKADLLQKMESIKQREIDRGVTLVGPHRDDSLFYINGQNVQDFGSQGQQRTTALSVKLAEIDLIHEETGEYPVLLLDDVLSELDDYRQSHLLGAIEGKVQTFVTTTSTSGIDHDTLKQATTFYVEKGTVKKS.

30-37 (GENAQGKT) is a binding site for ATP.

This sequence belongs to the RecF family.

Its subcellular location is the cytoplasm. The RecF protein is involved in DNA metabolism; it is required for DNA replication and normal SOS inducibility. RecF binds preferentially to single-stranded, linear DNA. It also seems to bind ATP. The polypeptide is DNA replication and repair protein RecF (Listeria welshimeri serovar 6b (strain ATCC 35897 / DSM 20650 / CCUG 15529 / CIP 8149 / NCTC 11857 / SLCC 5334 / V8)).